A 1394-amino-acid chain; its full sequence is Cyclic nucleotide-gated channel beta-1 (1394 aa).

Disordered stretches follow at residues 1–95 (MLGW…AHSS), 112–253 (VPQP…QDSA), and 271–675 (VIRG…SQNS). The Cytoplasmic segment spans residues 1–762 (MLGWVQRVLP…WKKYQFPQSI (762 aa)). 2 stretches are compositionally biased toward polar residues: residues 68–86 (PQGTQETALTPPTSLQAQV) and 116–125 (AHSSRPSQNI). Basic and acidic residues-rich tracts occupy residues 300-312 (EESHLILEEVDPH) and 336-355 (DEEKGKVVEQTPRELPRIQE). Residues 356 to 387 (EKEDEEEEKEDGEEEEEEGREKEEEEGEEKEE) are compositionally biased toward acidic residues. The span at 388-408 (EEGREKEEEEGEKKEEEGREK) shows a compositional bias: basic and acidic residues. Positions 409–418 (EEEEGGEKED) are enriched in acidic residues. Residues 419 to 433 (EEGREKEEEEGRGKE) are compositionally biased toward basic and acidic residues. Composition is skewed to acidic residues over residues 452–464 (EGREEEEDEEEEQ) and 481–490 (DRSEESETQD). Low complexity-rich tracts occupy residues 493–508 (EVGGAQAQGEVGGAQA) and 529–554 (EVGGAQAQGEVGGAQEQDGVGGAQDQ). A compositionally biased stretch (polar residues) spans 654 to 675 (DPTSPQGTDDQDRATSTASQNS). A calmodulin-binding CaM1 region spans residues 671 to 681 (ASQNSAIINDR). The IQ-like motif lies at 682–692 (LQELVKLFKER). Residues 699–732 (KLIDPDVTSDEESPKPSPAKKAPEPAPEVKPAEA) form a disordered region. The helical transmembrane segment at 763 to 793 (DPLTNLMYILWLFFVVLAWNWNCWLIPVRWA) threads the bilayer. Residues 794-798 (FPYQT) lie on the Extracellular side of the membrane. The chain crosses the membrane as a helical span at residues 799 to 825 (PDNIHLWLLMDYLCDLIYLLDITVFQM). Residues 826–837 (RLQFVRGGDIIT) lie on the Cytoplasmic side of the membrane. A helical membrane pass occupies residues 838–861 (DKKEMRNNYVKSQRFKMDMLCLLP). Residues 862-872 (LDLLYLKFGVN) lie on the Extracellular side of the membrane. The chain crosses the membrane as a helical span at residues 873–887 (PLLRLPRCLKYMAFF). At 888-900 (EFNNRLESILSKA) the chain is on the cytoplasmic side. Residues 900 to 999 (AYVYRVIRTT…IGQMRDVVGA (100 aa)) form an ion conduction pathway region. Residues 901–922 (YVYRVIRTTAYLLYSLHLNSCL) form a helical membrane-spanning segment. The Extracellular segment spans residues 923–931 (YYWASAYEG). Helical transmembrane passes span 932–974 (LGST…EIVF) and 975–1002 (QGLNYFTGVFAFSVMIGQMRDVVGAATA). Residues 959–962 (TIGG) are selectivity filter. Residues 1003 to 1394 (GQTYYRSCMD…EEARKEKEEE (392 aa)) are Cytoplasmic-facing. The cyclic nucleotide-binding domain stretch occupies residues 1082–1198 (RQMIFDMLKR…LLRKKARRML (117 aa)). 3',5'-cyclic GMP is bound by residues Gly1143, Glu1144, Ser1146, Arg1156, and Thr1157. Arg1156 lines the 3',5'-cyclic AMP pocket. The segment at 1261–1267 (QQQLLEQ) is calmodulin-binding CaM2. The segment at 1265–1394 (LEQAKSSEDA…EEARKEKEEE (130 aa)) is disordered. Pro residues predominate over residues 1285-1326 (EQPPRPEPPAPEAPAPEPTAPEPLAPEAPAPEAPAPSSPPPA). Basic and acidic residues-rich tracts occupy residues 1329–1345 (ERPEGDKDAARPEEHPV) and 1364–1376 (VPEKQEEKEKKEE).

Belongs to the cyclic nucleotide-gated cation channel (TC 1.A.1.5) family. CNGB1 subfamily. As to quaternary structure, the rod cyclic nucleotide-gated channel is a heterotetramer composed of CNGA1 and CNGB1 subunits with 3:1 stoichiometry. CNGA1:CNGB1 channel binds Ca(2+)-bound CALM1 via CaM1 and CaM2 regions of the CNGB1 subunit; this interaction modulates the affinity of the channel for cNMPs in response to intracellular Ca(2+) levels. The olfactory cyclic nucleotide-gated channel is a heterotetramer composed of CNGA2, CNGA4 and CNGB1 subunits with 2:1:1 stoichiometry. Retina, testis, kidney, heart and brain.

The protein localises to the membrane. The enzyme catalyses Ca(2+)(in) = Ca(2+)(out). It carries out the reaction Na(+)(in) = Na(+)(out). The catalysed reaction is K(+)(in) = K(+)(out). It catalyses the reaction NH4(+)(in) = NH4(+)(out). The enzyme catalyses Rb(+)(in) = Rb(+)(out). It carries out the reaction Li(+)(in) = Li(+)(out). The catalysed reaction is Cs(+)(in) = Cs(+)(out). Pore-forming subunit of the rod cyclic nucleotide-gated channel. Mediates rod photoresponses at dim light converting transient changes in intracellular cGMP levels into electrical signals. In the dark, cGMP levels are high and keep the channel open enabling a steady inward current carried by Na(+) and Ca(2+) ions that leads to membrane depolarization and neurotransmitter release from synaptic terminals. Upon photon absorption cGMP levels decline leading to channel closure and membrane hyperpolarization that ultimately slows neurotransmitter release and signals the presence of light, the end point of the phototransduction cascade. Pore-forming subunit of the olfactory cyclic nucleotide-gated channel. Operates in the cilia of olfactory sensory neurons where chemical stimulation of the odorant is converted to an electrical signal. Mediates odorant-induced cAMP-dependent Ca(2+) influx triggering neuron depolarization. The rise of intracellular Ca(2+) levels potentiates the olfactory response by activating Ca(2+)-dependent Cl(-) channels, but it also serves as a negative feedback signal to desensitize the channel for rapid adaptation to odorants. Conducts cGMP- and cAMP-gated ion currents, with permeability for monovalent and divalent cations. The selectivity for Ca(2+) over Na(+) increases with cGMP concentrations, whereas the selectivity among monovalent ions is independent of the cGMP levels. In Bos taurus (Bovine), this protein is Cyclic nucleotide-gated channel beta-1.